Reading from the N-terminus, the 73-residue chain is Large ribosomal subunit protein bL31 (73 aa).

The protein belongs to the bacterial ribosomal protein bL31 family. Type A subfamily. In terms of assembly, part of the 50S ribosomal subunit.

Binds the 23S rRNA. The chain is Large ribosomal subunit protein bL31 from Rhizobium meliloti (strain 1021) (Ensifer meliloti).